Reading from the N-terminus, the 274-residue chain is tRNA-cytidine(32) 2-sulfurtransferase (274 aa).

A PP-loop motif motif is present at residues 40–45 (SGGKDS). [4Fe-4S] cluster is bound by residues C115, C118, and C206.

The protein belongs to the TtcA family. Homodimer. The cofactor is Mg(2+). [4Fe-4S] cluster is required as a cofactor.

It is found in the cytoplasm. The enzyme catalyses cytidine(32) in tRNA + S-sulfanyl-L-cysteinyl-[cysteine desulfurase] + AH2 + ATP = 2-thiocytidine(32) in tRNA + L-cysteinyl-[cysteine desulfurase] + A + AMP + diphosphate + H(+). It functions in the pathway tRNA modification. Its function is as follows. Catalyzes the ATP-dependent 2-thiolation of cytidine in position 32 of tRNA, to form 2-thiocytidine (s(2)C32). The sulfur atoms are provided by the cysteine/cysteine desulfurase (IscS) system. The polypeptide is tRNA-cytidine(32) 2-sulfurtransferase (Ectopseudomonas mendocina (strain ymp) (Pseudomonas mendocina)).